A 49-amino-acid polypeptide reads, in one-letter code: Large ribosomal subunit protein eL40 (49 aa).

The protein belongs to the eukaryotic ribosomal protein eL40 family.

This Methanosarcina barkeri (strain Fusaro / DSM 804) protein is Large ribosomal subunit protein eL40.